The primary structure comprises 379 residues: Cell division protein FtsZ (379 aa).

Residues 18 to 22 (GGGVN), 105 to 107 (GTG), Glu136, Arg140, and Asp184 each bind GTP.

The protein belongs to the FtsZ family. Homodimer. Polymerizes to form a dynamic ring structure in a strictly GTP-dependent manner. Interacts directly with several other division proteins.

It is found in the cytoplasm. Essential cell division protein that forms a contractile ring structure (Z ring) at the future cell division site. The regulation of the ring assembly controls the timing and the location of cell division. One of the functions of the FtsZ ring is to recruit other cell division proteins to the septum to produce a new cell wall between the dividing cells. Binds GTP and shows GTPase activity. In Mycobacterium leprae (strain TN), this protein is Cell division protein FtsZ.